Consider the following 178-residue polypeptide: Major urinary protein 4 (178 aa).

A signal peptide spans 1–16 (MKLLLCLGLTLVCIHA). Cysteines 80 and 173 form a disulfide.

The protein belongs to the calycin superfamily. Lipocalin family. Expressed in lacrimal gland, parotid gland, sublingual gland, nasal mucus, and vomeronasal organ.

It localises to the secreted. Binds pheromones, likely to displace pheromones complexed to urinary MUPs and transport them to the vomeronasal organ (VNO) where they associate with their neuronal receptor(s). MUP4 is highly specific for the male mouse pheromone 2-sec-butyl-4,5-dihydrothiazole (SBT). This is Major urinary protein 4 (Mup4) from Mus musculus (Mouse).